The following is a 136-amino-acid chain: NADPH-dependent 7-cyano-7-deazaguanine reductase (136 aa).

Catalysis depends on Cys50, which acts as the Thioimide intermediate. The Proton donor role is filled by Asp57. Substrate is bound by residues 72-74 and 91-92; these read YEL and HE.

Belongs to the GTP cyclohydrolase I family. QueF type 1 subfamily.

The protein resides in the cytoplasm. It carries out the reaction 7-aminomethyl-7-carbaguanine + 2 NADP(+) = 7-cyano-7-deazaguanine + 2 NADPH + 3 H(+). It participates in tRNA modification; tRNA-queuosine biosynthesis. In terms of biological role, catalyzes the NADPH-dependent reduction of 7-cyano-7-deazaguanine (preQ0) to 7-aminomethyl-7-deazaguanine (preQ1). This is NADPH-dependent 7-cyano-7-deazaguanine reductase from Prochlorococcus marinus (strain MIT 9515).